Consider the following 361-residue polypeptide: 5-formaminoimidazole-4-carboxamide-1-(beta)-D-ribofuranosyl 5'-monophosphate synthetase (361 aa).

Positions 27 and 94 each coordinate 5-amino-1-(5-phospho-beta-D-ribosyl)imidazole-4-carboxamide. One can recognise an ATP-grasp domain in the interval Arg-116 to Lys-348. Residues Pro-146–Cys-208 and Glu-230 contribute to the ATP site. Asn-258 serves as a coordination point for 5-amino-1-(5-phospho-beta-D-ribosyl)imidazole-4-carboxamide. Mg(2+)-binding residues include Gln-297 and Glu-310.

Belongs to the phosphohexose mutase family. Mg(2+) serves as cofactor. It depends on Mn(2+) as a cofactor.

The catalysed reaction is 5-amino-1-(5-phospho-beta-D-ribosyl)imidazole-4-carboxamide + formate + ATP = 5-formamido-1-(5-phospho-D-ribosyl)imidazole-4-carboxamide + ADP + phosphate. It functions in the pathway purine metabolism; IMP biosynthesis via de novo pathway; 5-formamido-1-(5-phospho-D-ribosyl)imidazole-4-carboxamide from 5-amino-1-(5-phospho-D-ribosyl)imidazole-4-carboxamide (formate route): step 1/1. Its function is as follows. Catalyzes the ATP- and formate-dependent formylation of 5-aminoimidazole-4-carboxamide-1-beta-d-ribofuranosyl 5'-monophosphate (AICAR) to 5-formaminoimidazole-4-carboxamide-1-beta-d-ribofuranosyl 5'-monophosphate (FAICAR) in the absence of folates. The chain is 5-formaminoimidazole-4-carboxamide-1-(beta)-D-ribofuranosyl 5'-monophosphate synthetase from Methanococcus maripaludis (strain DSM 14266 / JCM 13030 / NBRC 101832 / S2 / LL).